Here is a 482-residue protein sequence, read N- to C-terminus: Variant surface glycoprotein ANTAT 1.1C (482 aa).

Residues 1 to 8 (LHPQQALA) form the signal peptide. 2 disulfides stabilise this stretch: cysteine 24–cysteine 151 and cysteine 133–cysteine 188. The N-linked (GlcNAc...) asparagine glycan is linked to asparagine 92. N-linked (GlcNAc...) asparagine glycans are attached at residues asparagine 398 and asparagine 411. The GPI-anchor amidated aspartate moiety is linked to residue aspartate 459. The propeptide at 460–482 (SSILVTKKFALSLVSAAFASLLF) is removed in mature form.

The protein resides in the cell membrane. VSG forms a coat on the surface of the parasite. The trypanosome evades the immune response of the host by expressing a series of antigenically distinct VSGs from an estimated 1000 VSG genes. The chain is Variant surface glycoprotein ANTAT 1.1C from Trypanosoma brucei brucei.